We begin with the raw amino-acid sequence, 198 residues long: Nucleoid occlusion factor SlmA (198 aa).

The 62-residue stretch at 9–70 (RNRREEILQS…SLIEFIEDSL (62 aa)) folds into the HTH tetR-type domain. Positions 33 to 52 (TTAKLAASVGVSEAALYRHF) form a DNA-binding region, H-T-H motif. The stretch at 117 to 145 (EQDRLQGRINQLFERIEAQLRQVLREKKM) forms a coiled coil.

The protein belongs to the nucleoid occlusion factor SlmA family. In terms of assembly, homodimer. Interacts with FtsZ.

The protein localises to the cytoplasm. It localises to the nucleoid. Functionally, required for nucleoid occlusion (NO) phenomenon, which prevents Z-ring formation and cell division over the nucleoid. Acts as a DNA-associated cell division inhibitor that binds simultaneously chromosomal DNA and FtsZ, and disrupts the assembly of FtsZ polymers. SlmA-DNA-binding sequences (SBS) are dispersed on non-Ter regions of the chromosome, preventing FtsZ polymerization at these regions. This is Nucleoid occlusion factor SlmA from Cronobacter sakazakii (strain ATCC BAA-894) (Enterobacter sakazakii).